The chain runs to 308 residues: Methionyl-tRNA formyltransferase (308 aa).

A (6S)-5,6,7,8-tetrahydrofolate-binding site is contributed by 110-113 (SLLP).

This sequence belongs to the Fmt family.

The enzyme catalyses L-methionyl-tRNA(fMet) + (6R)-10-formyltetrahydrofolate = N-formyl-L-methionyl-tRNA(fMet) + (6S)-5,6,7,8-tetrahydrofolate + H(+). Its function is as follows. Attaches a formyl group to the free amino group of methionyl-tRNA(fMet). The formyl group appears to play a dual role in the initiator identity of N-formylmethionyl-tRNA by promoting its recognition by IF2 and preventing the misappropriation of this tRNA by the elongation apparatus. The chain is Methionyl-tRNA formyltransferase from Neisseria meningitidis serogroup A / serotype 4A (strain DSM 15465 / Z2491).